The sequence spans 115 residues: Transcription and mRNA export factor ENY2 (115 aa).

Belongs to the ENY2 family. In terms of assembly, component of a deubiquitination module (DUB module) formed by ENY2, SGF11, and UBP22 in Arabidopsis. Interacts directly with SGF11, but not with UBP22. Interacts with MOS4. As to expression, expressed in roots, cotyledons, leaves and upper part of sepals.

It is found in the nucleus. Its subcellular location is the nucleoplasm. Its function is as follows. Component of a deubiquitination module (DUB module) that specifically deubiquinates monoubiquinated histone H2B (H2Bub). Does not seem to be a component of the TREX-2 complex. Seems to act independently of the SAGA multiprotein complex. The DUB module is responsible for the major H2Bub deubiquitinase activity in Arabidopsis. This chain is Transcription and mRNA export factor ENY2, found in Arabidopsis thaliana (Mouse-ear cress).